Reading from the N-terminus, the 429-residue chain is Histidine--tRNA ligase (429 aa).

The protein belongs to the class-II aminoacyl-tRNA synthetase family. As to quaternary structure, homodimer.

The protein resides in the cytoplasm. It catalyses the reaction tRNA(His) + L-histidine + ATP = L-histidyl-tRNA(His) + AMP + diphosphate + H(+). This Streptococcus pneumoniae (strain Hungary19A-6) protein is Histidine--tRNA ligase.